Reading from the N-terminus, the 769-residue chain is Protein transport protein sec39 (769 aa).

It belongs to the SEC39 family. In terms of assembly, component of a peripheral membrane protein complex consisting of dsl1, sec39 and tip20.

It is found in the endoplasmic reticulum membrane. In terms of biological role, required for protein transport between the Golgi and the endoplasmic reticulum. May contribute to tethering of coatomer-coated retrograde transport vesicles to the ER membrane through interaction with and stabilization of the SNARE complex. This Schizosaccharomyces pombe (strain 972 / ATCC 24843) (Fission yeast) protein is Protein transport protein sec39.